A 218-amino-acid chain; its full sequence is N-(5'-phosphoribosyl)anthranilate isomerase (218 aa).

It belongs to the TrpF family.

It catalyses the reaction N-(5-phospho-beta-D-ribosyl)anthranilate = 1-(2-carboxyphenylamino)-1-deoxy-D-ribulose 5-phosphate. It functions in the pathway amino-acid biosynthesis; L-tryptophan biosynthesis; L-tryptophan from chorismate: step 3/5. The protein is N-(5'-phosphoribosyl)anthranilate isomerase of Alcanivorax borkumensis (strain ATCC 700651 / DSM 11573 / NCIMB 13689 / SK2).